Reading from the N-terminus, the 214-residue chain is Probable transaldolase (214 aa).

The active-site Schiff-base intermediate with substrate is lysine 83.

It belongs to the transaldolase family. Type 3B subfamily.

The protein localises to the cytoplasm. It carries out the reaction D-sedoheptulose 7-phosphate + D-glyceraldehyde 3-phosphate = D-erythrose 4-phosphate + beta-D-fructose 6-phosphate. The protein operates within carbohydrate degradation; pentose phosphate pathway; D-glyceraldehyde 3-phosphate and beta-D-fructose 6-phosphate from D-ribose 5-phosphate and D-xylulose 5-phosphate (non-oxidative stage): step 2/3. Transaldolase is important for the balance of metabolites in the pentose-phosphate pathway. The polypeptide is Probable transaldolase (Streptococcus equi subsp. zooepidemicus (strain MGCS10565)).